A 92-amino-acid polypeptide reads, in one-letter code: Small ribosomal subunit protein uS17 (92 aa).

Belongs to the universal ribosomal protein uS17 family. In terms of assembly, part of the 30S ribosomal subunit.

One of the primary rRNA binding proteins, it binds specifically to the 5'-end of 16S ribosomal RNA. The sequence is that of Small ribosomal subunit protein uS17 from Corynebacterium diphtheriae (strain ATCC 700971 / NCTC 13129 / Biotype gravis).